A 99-amino-acid polypeptide reads, in one-letter code: Integration host factor subunit alpha (99 aa).

The disordered stretch occupies residues phenylalanine 49 to aspartate 70.

Belongs to the bacterial histone-like protein family. As to quaternary structure, heterodimer of an alpha and a beta chain.

In terms of biological role, this protein is one of the two subunits of integration host factor, a specific DNA-binding protein that functions in genetic recombination as well as in transcriptional and translational control. This is Integration host factor subunit alpha from Cronobacter sakazakii (strain ATCC BAA-894) (Enterobacter sakazakii).